A 128-amino-acid polypeptide reads, in one-letter code: Small ribosomal subunit protein uS9 (128 aa).

Belongs to the universal ribosomal protein uS9 family.

The protein is Small ribosomal subunit protein uS9 of Christiangramia forsetii (strain DSM 17595 / CGMCC 1.15422 / KT0803) (Gramella forsetii).